The chain runs to 363 residues: MSGKGLSPAPFNAQPMIVQDADPLRFRVGEQDPKTREFAAFIGDHRYFAAAAAAAAAANPHPHLEFRQNFYSEKPIIGNPNDSGGSDGEDDVDVEEEDEDDDLDGNEGDIGMNKDAGEDSVSAGAVIVVGQDNAAYYSQHFKTVEASFVSRNEESSIAADNGCDFSGRRDLSSSSSNSIESLRTILSDPTTGSLMADAMILPCGHTFGAGGIEQVKQMKACCTCSQPVSEDSITPNLTLRVAVQAFCREENSQSNHPSKRKREGFDQERRAFGVTNHSGRSRNKSNHFPFAVADRVIIKGNKRTPPRFVGREAVVTTQCLNGWYVVKTLDNAESVKLQYRSLAKAPEDPSAKATPNKMVSNWL.

The segment at 74-117 is disordered; sequence KPIIGNPNDSGGSDGEDDVDVEEEDEDDDLDGNEGDIGMNKDAG. Residues 87–107 show a composition bias toward acidic residues; the sequence is DGEDDVDVEEEDEDDDLDGNE. Residues 181–253 enclose the U-box domain; it reads SLRTILSDPT…QAFCREENSQ (73 aa). Residues 343 to 363 are disordered; sequence AKAPEDPSAKATPNKMVSNWL.

It catalyses the reaction S-ubiquitinyl-[E2 ubiquitin-conjugating enzyme]-L-cysteine + [acceptor protein]-L-lysine = [E2 ubiquitin-conjugating enzyme]-L-cysteine + N(6)-ubiquitinyl-[acceptor protein]-L-lysine.. The protein operates within protein modification; protein ubiquitination. Functionally, functions as an E3 ubiquitin ligase. The protein is U-box domain-containing protein 62 (PUB62) of Arabidopsis thaliana (Mouse-ear cress).